A 246-amino-acid polypeptide reads, in one-letter code: Large ribosomal subunit protein uL2 (246 aa).

The tract at residues 196–226 (MSPYAHPHGGGSHQKGGTPVPKTAPPGQKVG) is disordered.

Belongs to the universal ribosomal protein uL2 family. In terms of assembly, part of the 50S ribosomal subunit. Forms a bridge to the 30S subunit in the 70S ribosome.

One of the primary rRNA binding proteins. Required for association of the 30S and 50S subunits to form the 70S ribosome, for tRNA binding and peptide bond formation. It has been suggested to have peptidyltransferase activity; this is somewhat controversial. Makes several contacts with the 16S rRNA in the 70S ribosome. This Pyrobaculum arsenaticum (strain DSM 13514 / JCM 11321 / PZ6) protein is Large ribosomal subunit protein uL2.